The sequence spans 101 residues: Small ribosomal subunit protein bS18c (101 aa).

It belongs to the bacterial ribosomal protein bS18 family. Part of the 30S ribosomal subunit.

The protein localises to the plastid. It is found in the chloroplast. The protein is Small ribosomal subunit protein bS18c of Solanum bulbocastanum (Wild potato).